A 179-amino-acid chain; its full sequence is Large ribosomal subunit protein uL5 (179 aa).

Belongs to the universal ribosomal protein uL5 family. Part of the 50S ribosomal subunit; part of the 5S rRNA/L5/L18/L25 subcomplex. Contacts the 5S rRNA and the P site tRNA. Forms a bridge to the 30S subunit in the 70S ribosome.

In terms of biological role, this is one of the proteins that bind and probably mediate the attachment of the 5S RNA into the large ribosomal subunit, where it forms part of the central protuberance. In the 70S ribosome it contacts protein S13 of the 30S subunit (bridge B1b), connecting the 2 subunits; this bridge is implicated in subunit movement. Contacts the P site tRNA; the 5S rRNA and some of its associated proteins might help stabilize positioning of ribosome-bound tRNAs. This is Large ribosomal subunit protein uL5 from Ruthia magnifica subsp. Calyptogena magnifica.